The following is a 593-amino-acid chain: Solute carrier family 40 member 3, chloroplastic (593 aa).

Positions 1-23 are disordered; sequence MSMSKLLSPPPTSPPGPALSRLP. The transit peptide at 1–51 directs the protein to the chloroplast; the sequence is MSMSKLLSPPPTSPPGPALSRLPCRRVAPPPVLPFPFPLRRLTSRRVFATS. The span at 8 to 17 shows a compositional bias: pro residues; the sequence is SPPPTSPPGP. 11 consecutive transmembrane segments (helical) span residues 181 to 201, 219 to 239, 253 to 273, 303 to 322, 323 to 343, 403 to 423, 431 to 451, 462 to 482, 493 to 513, 530 to 550, and 557 to 577; these read ILPV…AGPL, AAIQ…AFAV, FAVL…LGII, LLCE…KNNP, LTCI…LIFL, YVFV…TFLI, VIGA…FATA, AGAA…VVYL, LFAF…YSAI, IGAT…AVAV, and HFGA…GMYC.

It belongs to the ferroportin (FP) (TC 2.A.100) family. SLC40A subfamily.

The protein localises to the membrane. Its subcellular location is the plastid. The protein resides in the chloroplast envelope. Functionally, may be involved in iron transport and iron homeostasis. The chain is Solute carrier family 40 member 3, chloroplastic from Oryza sativa subsp. japonica (Rice).